A 1526-amino-acid polypeptide reads, in one-letter code: Ig-like and fibronectin type-III domain-containing protein 2 (1526 aa).

The first 19 residues, 1 to 19 (MMRWRLAVLFLTLLASTTG), serve as a signal peptide directing secretion. A disordered region spans residues 20-39 (DDTTTKASVSTTTKKGTDGP). Residues 20-1415 (DDTTTKASVS…RRSASKGSSS (1396 aa)) are Extracellular-facing. The segment covering 24–33 (TKASVSTTTK) has biased composition (low complexity). One can recognise an Ig-like C2-type 1 domain in the interval 39–170 (PHLTTDDEGF…ELLEFQVEVL (132 aa)). C61 and C154 form a disulfide bridge. N87, N143, N158, N181, N414, N427, N475, N489, N533, N590, N617, and N662 each carry an N-linked (GlcNAc...) asparagine glycan. Residues 379-470 (APRGKRDVDF…VRNIASTNVH (92 aa)) enclose the Fibronectin type-III 1 domain. The 92-residue stretch at 587–678 (APGNVTISEL…TAKLFSTLPT (92 aa)) folds into the Fibronectin type-III 2 domain. In terms of domain architecture, WR1 spans 682–724 (PLCTIGEPIYMNDGRVMICDAVNPCPNGFRCTGAGSDLSYCCP). N-linked (GlcNAc...) asparagine glycans are attached at residues N754, N871, N906, N939, N979, N1004, and N1049. Fibronectin type-III domains follow at residues 827 to 914 (AVRN…TKPA) and 924 to 1020 (APEK…AQKD). The region spanning 1116–1207 (ASVTMKKDKI…SRVEASSEVI (92 aa)) is the Ig-like C2-type 2 domain. The cysteines at positions 1137 and 1190 are disulfide-linked. N1250 carries N-linked (GlcNAc...) asparagine glycosylation. A Fibronectin type-III 5 domain is found at 1314–1406 (APSEVSNVRI…SAIPKDSEPR (93 aa)). Residues 1416-1436 (AFWIVVILVVFGVLIAGLAVL) form a helical membrane-spanning segment. The Cytoplasmic segment spans residues 1437 to 1526 (SKRRELPYPI…NGMRYAKLET (90 aa)). The tract at residues 1485 to 1518 (SATTGTAAATQSEWQSANLEANSTTDNSHEYRNG) is disordered. Positions 1495–1510 (QSEWQSANLEANSTTD) are enriched in polar residues.

Its subcellular location is the cell membrane. The sequence is that of Ig-like and fibronectin type-III domain-containing protein 2 from Caenorhabditis elegans.